Here is a 466-residue protein sequence, read N- to C-terminus: MITLYNTLTRQKEVFKPIEPGKVKMYVCGPTVYNYIHIGNARPAINYDVVRRYFEYQGYNVEYVSNFTDVDDKLIKRSQELNQTVPEIAEKYIAAFHEDVGALNVRKATSNPRVMDHMDDIIQFIKDLVDQGYAYESGGDVYFRTRKFEGYGKLSHQSIDDLKVGARIDAGEHKEDALDFTLWKKAKPGEISWDSPFGEGRPGWHIECSVMAFHELGATIDIHAGGSDLQFPHHENEIAQSEAHNHAPFANYWMHNGFINIDNEKMSKSLGNFILVHDIIKEVDPDVLRFFVISVHYRSPINYNLELVESARSGLERIRNSYQLIEERAQIATNIENQQTYIDQIDAILNRFETVMNDDFNTANAITAWYDLAKLANKYVLENTTSTEVIDKFKAVYQIFSDVLGVPLKSKKADELLDEDVEKLIEERNEARKNKDFARADEIRDMLKSQNIILEDTPQGVRFKRG.

Position 28 (cysteine 28) interacts with Zn(2+). The 'HIGH' region motif lies at 30-40; the sequence is PTVYNYIHIGN. Positions 208, 233, and 237 each coordinate Zn(2+). Residues 265-269 carry the 'KMSKS' region motif; that stretch reads KMSKS. Position 268 (lysine 268) interacts with ATP.

Belongs to the class-I aminoacyl-tRNA synthetase family. Monomer. Zn(2+) is required as a cofactor.

It is found in the cytoplasm. It catalyses the reaction tRNA(Cys) + L-cysteine + ATP = L-cysteinyl-tRNA(Cys) + AMP + diphosphate. This is Cysteine--tRNA ligase from Staphylococcus aureus (strain MRSA252).